A 128-amino-acid polypeptide reads, in one-letter code: Glycine cleavage system H protein (128 aa).

The 83-residue stretch at 23–105 (IGIVGITWFA…YGEGWILKLE (83 aa)) folds into the Lipoyl-binding domain. At K64 the chain carries N6-lipoyllysine.

It belongs to the GcvH family. In terms of assembly, the glycine cleavage system is composed of four proteins: P, T, L and H. It depends on (R)-lipoate as a cofactor.

Functionally, the glycine cleavage system catalyzes the degradation of glycine. The H protein shuttles the methylamine group of glycine from the P protein to the T protein. This chain is Glycine cleavage system H protein, found in Symbiobacterium thermophilum (strain DSM 24528 / JCM 14929 / IAM 14863 / T).